A 435-amino-acid chain; its full sequence is MTEEVFIMSQERVKRPGHTRWYISSLLSGIIILNYFDRVAISVAAPAIQDSFHLTATELGIVFSIYTYSYTLMQLPVGSLLDRFGVAWVTRVGMTIWSFLTILLAFLQGKLLLYLFRFLIGLTSASAFPAASKATALWFPPSERGLANSLFDSAAKFSNVIGAPLVAFLVTTFDWRVAFLTIGCINVLFTIFFWQYYEQPERHKRISKSELNYIQKHNAITTEQIPYKTGPLLKKLFTNRKVWGLMIGFTGYGYTFNLLLTWLPTFFKHTYGMDLMSSGLFTAVPWLISTISGIAVGGWLVDYFIKKGYPNTKVYRTVIIVGMSFGFFFLGSILTNNITVAIICISIGLAGISATAPVGWSISAELAPIGSVSMLSSMVNLANNLFGGIIAASLTGYLFDVTGSFTLSFLVAGFVLLLGLVFYVFVLGDVKRIKL.

12 helical membrane-spanning segments follow: residues 26 to 46 (LLSG…VAAP), 61 to 81 (IVFS…GSLL), 96 to 116 (IWSF…LYLF), 119 to 139 (LIGL…ALWF), 150 to 170 (LFDS…AFLV), 177 to 197 (VAFL…WQYY), 242 to 262 (VWGL…LLTW), 281 to 301 (FTAV…GWLV), 325 to 345 (FGFF…IICI), 347 to 367 (IGLA…AELA), 385 to 405 (LFGG…TGSF), and 407 to 427 (LSFL…VFVL).

This sequence belongs to the major facilitator superfamily. Phthalate permease family.

Its subcellular location is the cell membrane. This is an uncharacterized protein from Bacillus subtilis (strain 168).